The primary structure comprises 631 residues: Squalene--hopene cyclase (631 aa).

PFTB repeat units lie at residues 15-56, 61-102, and 241-282; these read LDRA…LDRV, MEKI…KYIG, and EIRA…QHPA. The active-site Proton donor is D376. PFTB repeat units lie at residues 400 to 441, 468 to 508, 516 to 557, and 574 to 622; these read MTKG…GEVT, IRRA…KAVG, IQKA…SQTA, and ARRG…LALG.

This sequence belongs to the terpene cyclase/mutase family. In terms of assembly, homodimer.

It localises to the cell membrane. The catalysed reaction is squalene = hop-22(29)-ene. It carries out the reaction squalene + H2O = hopan-22-ol. It participates in secondary metabolite biosynthesis; hopanoid biosynthesis. Catalyzes the cyclization of squalene to two pentacyclic triterpenes, hop-22(29)-ene and hopan-22-ol (diplopterol); hopene and hopanol are formed at a constant ratio of 5:1. Is a key enzyme of hopanoid biosynthesis; hopanoids are components of the bacterial cytoplasmic membranes that play a vital role in stabilizing the membranes. In Alicyclobacillus acidocaldarius subsp. acidocaldarius (strain ATCC 27009 / DSM 446 / BCRC 14685 / JCM 5260 / KCTC 1825 / NBRC 15652 / NCIMB 11725 / NRRL B-14509 / 104-IA) (Bacillus acidocaldarius), this protein is Squalene--hopene cyclase (shc).